Here is a 289-residue protein sequence, read N- to C-terminus: ATP synthase subunit a (289 aa).

6 helical membrane-spanning segments follow: residues 43–63 (AFHVDTLGWSVALGLIFVLLF), 103–123 (VIAPLALTIFVWVFLMNAVDL), 160–180 (FSVFALIIFYSIKVKGLGGFI), 193–213 (IFVQALLIPVNFLLEFVTLIA), 232–252 (VFILIAVMFGSGLLWLSGLGV), and 259–279 (AVFHILIITLQAFIFMMLTIV).

Belongs to the ATPase A chain family. As to quaternary structure, F-type ATPases have 2 components, CF(1) - the catalytic core - and CF(0) - the membrane proton channel. CF(1) has five subunits: alpha(3), beta(3), gamma(1), delta(1), epsilon(1). CF(0) has three main subunits: a(1), b(2) and c(9-12). The alpha and beta chains form an alternating ring which encloses part of the gamma chain. CF(1) is attached to CF(0) by a central stalk formed by the gamma and epsilon chains, while a peripheral stalk is formed by the delta and b chains.

It is found in the cell inner membrane. Key component of the proton channel; it plays a direct role in the translocation of protons across the membrane. The polypeptide is ATP synthase subunit a (Pseudomonas fluorescens (strain Pf0-1)).